Consider the following 92-residue polypeptide: Small ribosomal subunit protein uS19c (92 aa).

This sequence belongs to the universal ribosomal protein uS19 family.

The protein localises to the plastid. Its subcellular location is the chloroplast. Functionally, protein S19 forms a complex with S13 that binds strongly to the 16S ribosomal RNA. This is Small ribosomal subunit protein uS19c from Psilotum nudum (Whisk fern).